Here is an 89-residue protein sequence, read N- to C-terminus: Small ribosomal subunit protein uS19 (89 aa).

It belongs to the universal ribosomal protein uS19 family.

Protein S19 forms a complex with S13 that binds strongly to the 16S ribosomal RNA. The protein is Small ribosomal subunit protein uS19 of Stenotrophomonas maltophilia (strain K279a).